A 292-amino-acid polypeptide reads, in one-letter code: Xanthine dehydrogenase FAD-binding subunit (292 aa).

In terms of domain architecture, FAD-binding PCMH-type spans 1 to 176 (MFDFASYHRA…VAFHFPPQPK (176 aa)). FAD-binding positions include 27 to 34 (KLLAGGTD), 109 to 113 (ATYGG), Ile165, and Phe184.

Heterotrimer of XdhA, XdhB and XdhC. It depends on FAD as a cofactor.

It catalyses the reaction xanthine + NAD(+) + H2O = urate + NADH + H(+). The enzyme catalyses hypoxanthine + NAD(+) + H2O = xanthine + NADH + H(+). Its pathway is purine metabolism; hypoxanthine degradation; urate from hypoxanthine: step 1/2. The protein operates within purine metabolism; hypoxanthine degradation; urate from hypoxanthine: step 2/2. Its function is as follows. Presumed to be a dehydrogenase, but possibly an oxidase. Participates in limited purine salvage (requires aspartate) but does not support aerobic growth on purines as the sole carbon source (purine catabolism). In Escherichia coli O157:H7, this protein is Xanthine dehydrogenase FAD-binding subunit (xdhB).